The chain runs to 427 residues: Enolase (427 aa).

(2R)-2-phosphoglycerate is bound at residue glutamine 163. The active-site Proton donor is glutamate 205. The Mg(2+) site is built by aspartate 242, glutamate 287, and aspartate 314. Positions 339, 368, 369, and 390 each coordinate (2R)-2-phosphoglycerate. Lysine 339 acts as the Proton acceptor in catalysis.

This sequence belongs to the enolase family. Mg(2+) is required as a cofactor.

The protein resides in the cytoplasm. The protein localises to the secreted. It localises to the cell surface. The enzyme catalyses (2R)-2-phosphoglycerate = phosphoenolpyruvate + H2O. It functions in the pathway carbohydrate degradation; glycolysis; pyruvate from D-glyceraldehyde 3-phosphate: step 4/5. Catalyzes the reversible conversion of 2-phosphoglycerate (2-PG) into phosphoenolpyruvate (PEP). It is essential for the degradation of carbohydrates via glycolysis. The sequence is that of Enolase from Solibacter usitatus (strain Ellin6076).